Consider the following 427-residue polypeptide: Chaperone SurA (427 aa).

Positions Met-1–Ala-13 are cleaved as a signal peptide. 2 consecutive PpiC domains span residues Ser-164–Glu-265 and Arg-275–Gly-374.

It is found in the periplasm. The enzyme catalyses [protein]-peptidylproline (omega=180) = [protein]-peptidylproline (omega=0). In terms of biological role, chaperone involved in the correct folding and assembly of outer membrane proteins. Recognizes specific patterns of aromatic residues and the orientation of their side chains, which are found more frequently in integral outer membrane proteins. May act in both early periplasmic and late outer membrane-associated steps of protein maturation. This Pseudomonas putida (strain ATCC 47054 / DSM 6125 / CFBP 8728 / NCIMB 11950 / KT2440) protein is Chaperone SurA.